The following is a 690-amino-acid chain: Protein hook (690 aa).

The Calponin-homology (CH) domain maps to 6–122 (MEIYESLIRW…RLLQLILGCA (117 aa)). Coiled coils occupy residues 134 to 515 (QIME…HHAE) and 546 to 577 (ETTQ…QAAD).

This sequence belongs to the hook family. Homodimer. Interacts with microtubules via its N-terminus.

It localises to the cytoplasm. Its subcellular location is the cytoskeleton. The protein localises to the endosome. In terms of biological role, involved in endocytic trafficking. Probably acts as a cytoskeletal linker protein that tethers endosome vesicles to the cytoskeleton. This is Protein hook from Anopheles gambiae (African malaria mosquito).